The following is a 177-amino-acid chain: Nucleoside triphosphate/diphosphate phosphatase (177 aa).

Arginine 23 acts as the Proton donor in catalysis. Residues asparagine 87, aspartate 103, aspartate 105, aspartate 107, aspartate 120, and glutamate 123 each contribute to the Mg(2+) site.

This sequence belongs to the Ntdp family. The cofactor is Mg(2+).

The catalysed reaction is a ribonucleoside 5'-triphosphate + H2O = a ribonucleoside 5'-diphosphate + phosphate + H(+). It carries out the reaction a ribonucleoside 5'-diphosphate + H2O = a ribonucleoside 5'-phosphate + phosphate + H(+). Has nucleoside phosphatase activity towards nucleoside triphosphates and nucleoside diphosphates. This Streptococcus mutans serotype c (strain ATCC 700610 / UA159) protein is Nucleoside triphosphate/diphosphate phosphatase.